Here is a 246-residue protein sequence, read N- to C-terminus: Probable transcriptional regulatory protein Dshi_2762 (246 aa).

This sequence belongs to the TACO1 family.

The protein localises to the cytoplasm. The sequence is that of Probable transcriptional regulatory protein Dshi_2762 from Dinoroseobacter shibae (strain DSM 16493 / NCIMB 14021 / DFL 12).